A 441-amino-acid polypeptide reads, in one-letter code: uncharacterized protein (441 aa).

It belongs to the outer membrane factor (OMF) (TC 1.B.17) family.

This is an uncharacterized protein from Haemophilus influenzae (strain ATCC 51907 / DSM 11121 / KW20 / Rd).